Consider the following 543-residue polypeptide: NADH-ubiquinone oxidoreductase chain 4 (543 aa).

The next 14 helical transmembrane spans lie at 5–25, 84–104, 129–149, 161–181, 182–202, 213–233, 254–274, 287–307, 321–341, 350–370, 377–397, 416–436, 456–476, and 501–521; these read FLMFLFALLIIPIIGIFIIWS, VVAFIISILNLMVSLLVYILF, VDGISIYFVLLTTIIIPIALM, SYLIIMLLLETLLLAVFLVLD, ILLFYIFFESILPPLFILIGL, FYIFLYTLLGSLFLLLSILTM, IQIFLFCGIFIAFAVKTPTIF, PLGGSIVLAGIVLKLSLYGIF, YTYIIFVIGVITIIYASFSTL, IAYSSVSHAAVYLIGVFSNTI, ILLGLAHGFTSPALFFIVGGV, MAPLLSLLFFIFSLANCGVPL, LLGLLASSSIVFSAAYSIFLF, and FYALIFLGVLVVFLGIYPSII.

Belongs to the complex I subunit 4 family.

The protein localises to the mitochondrion membrane. The enzyme catalyses a ubiquinone + NADH + 5 H(+)(in) = a ubiquinol + NAD(+) + 4 H(+)(out). Its function is as follows. Core subunit of the mitochondrial membrane respiratory chain NADH dehydrogenase (Complex I) that is believed to belong to the minimal assembly required for catalysis. Complex I functions in the transfer of electrons from NADH to the respiratory chain. The immediate electron acceptor for the enzyme is believed to be ubiquinone. The protein is NADH-ubiquinone oxidoreductase chain 4 (ndh-4) of Neurospora crassa (strain ATCC 24698 / 74-OR23-1A / CBS 708.71 / DSM 1257 / FGSC 987).